We begin with the raw amino-acid sequence, 653 residues long: UvrABC system protein B (653 aa).

One can recognise a Helicase ATP-binding domain in the interval 25–182 (EGIERGVREQ…EKLVELQYKS (158 aa)). 38-45 (GVTGSGKT) is a binding site for ATP. A Beta-hairpin motif is present at residues 91–114 (YYDYYQPEAYIPHSDVYIEKDALI). The Helicase C-terminal domain occupies 429–591 (QIADVVNESQ…ITPKSISKSV (163 aa)). The region spanning 616 to 651 (EEDIIKLQKEMLLHAENLEFEKALEIRNQINKLSQH) is the UVR domain.

This sequence belongs to the UvrB family. Forms a heterotetramer with UvrA during the search for lesions. Interacts with UvrC in an incision complex.

Its subcellular location is the cytoplasm. Functionally, the UvrABC repair system catalyzes the recognition and processing of DNA lesions. A damage recognition complex composed of 2 UvrA and 2 UvrB subunits scans DNA for abnormalities. Upon binding of the UvrA(2)B(2) complex to a putative damaged site, the DNA wraps around one UvrB monomer. DNA wrap is dependent on ATP binding by UvrB and probably causes local melting of the DNA helix, facilitating insertion of UvrB beta-hairpin between the DNA strands. Then UvrB probes one DNA strand for the presence of a lesion. If a lesion is found the UvrA subunits dissociate and the UvrB-DNA preincision complex is formed. This complex is subsequently bound by UvrC and the second UvrB is released. If no lesion is found, the DNA wraps around the other UvrB subunit that will check the other stand for damage. This chain is UvrABC system protein B, found in Anaplasma phagocytophilum (strain HZ).